Consider the following 447-residue polypeptide: NADP-specific glutamate dehydrogenase (447 aa).

3 residues coordinate substrate: Lys-92, Gln-113, and Lys-116. The active-site Proton donor is the Lys-128. Gly-167 is a binding site for substrate. NADP(+) contacts are provided by Thr-211 and Asn-242. Ser-380 contributes to the substrate binding site.

It belongs to the Glu/Leu/Phe/Val dehydrogenases family. Homohexamer.

The enzyme catalyses L-glutamate + NADP(+) + H2O = 2-oxoglutarate + NH4(+) + NADPH + H(+). With respect to regulation, competitively inhibited by homoserine and by glutamine. In terms of biological role, catalyzes the reversible oxidative deamination of glutamate to alpha-ketoglutarate and ammonia. The protein is NADP-specific glutamate dehydrogenase of Escherichia coli (strain K12).